The sequence spans 838 residues: Spindle pole body component 110 (838 aa).

3 disordered regions span residues 1–67 (MSDS…ADDT), 187–209 (SEHK…MRSL), and 287–310 (LQKA…KEIE). Coiled-coil stretches lie at residues 163–644 (LQEW…GKRE) and 682–709 (SEKY…LERA). Residues 287–303 (LQKANHDSSSLADQKLQ) are compositionally biased toward polar residues.

The protein belongs to the SPC110 family. In terms of assembly, homodimer.

Its subcellular location is the nucleus. It is found in the cytoplasm. It localises to the cytoskeleton. The protein localises to the microtubule organizing center. The protein resides in the spindle pole body. Its function is as follows. Component of the spindle pole body (SPB) required for the proper execution of spindle pole body (SPB) duplication. Potential role in cross-linking filaments or anchoring other molecules. It is essential for growth. This Lachancea thermotolerans (strain ATCC 56472 / CBS 6340 / NRRL Y-8284) (Yeast) protein is Spindle pole body component 110 (SPC110).